The chain runs to 183 residues: Potassium-transporting ATPase KdpC subunit (183 aa).

Residues 10 to 30 (ASLLVLSLVTGVAYPLLVTGI) form a helical membrane-spanning segment.

This sequence belongs to the KdpC family. As to quaternary structure, the system is composed of three essential subunits: KdpA, KdpB and KdpC.

It localises to the cell inner membrane. Part of the high-affinity ATP-driven potassium transport (or Kdp) system, which catalyzes the hydrolysis of ATP coupled with the electrogenic transport of potassium into the cytoplasm. This subunit acts as a catalytic chaperone that increases the ATP-binding affinity of the ATP-hydrolyzing subunit KdpB by the formation of a transient KdpB/KdpC/ATP ternary complex. In Pseudomonas aeruginosa (strain ATCC 15692 / DSM 22644 / CIP 104116 / JCM 14847 / LMG 12228 / 1C / PRS 101 / PAO1), this protein is Potassium-transporting ATPase KdpC subunit.